The sequence spans 57 residues: Small ribosomal subunit protein bS21 (57 aa).

It belongs to the bacterial ribosomal protein bS21 family.

The polypeptide is Small ribosomal subunit protein bS21 (Lysinibacillus sphaericus (strain C3-41)).